The sequence spans 377 residues: Lipoyl synthase, mitochondrial (377 aa).

Residues 1–77 (MFRRGGRILN…LPNGSVHKRL (77 aa)) constitute a mitochondrion transit peptide. Cys107, Cys112, Cys118, Cys138, Cys142, Cys145, and Ser353 together coordinate [4Fe-4S] cluster. Residues 123 to 342 (DKTRATATIM…RKRAEELGFL (220 aa)) form the Radical SAM core domain.

This sequence belongs to the radical SAM superfamily. Lipoyl synthase family. [4Fe-4S] cluster is required as a cofactor.

The protein resides in the mitochondrion. The catalysed reaction is [[Fe-S] cluster scaffold protein carrying a second [4Fe-4S](2+) cluster] + N(6)-octanoyl-L-lysyl-[protein] + 2 oxidized [2Fe-2S]-[ferredoxin] + 2 S-adenosyl-L-methionine + 4 H(+) = [[Fe-S] cluster scaffold protein] + N(6)-[(R)-dihydrolipoyl]-L-lysyl-[protein] + 4 Fe(3+) + 2 hydrogen sulfide + 2 5'-deoxyadenosine + 2 L-methionine + 2 reduced [2Fe-2S]-[ferredoxin]. The protein operates within protein modification; protein lipoylation via endogenous pathway; protein N(6)-(lipoyl)lysine from octanoyl-[acyl-carrier-protein]: step 2/2. In terms of biological role, catalyzes the radical-mediated insertion of two sulfur atoms into the C-6 and C-8 positions of the octanoyl moiety bound to the lipoyl domains of lipoate-dependent enzymes, thereby converting the octanoylated domains into lipoylated derivatives. This Schizosaccharomyces japonicus (strain yFS275 / FY16936) (Fission yeast) protein is Lipoyl synthase, mitochondrial.